The following is a 686-amino-acid chain: Pentatricopeptide repeat-containing protein 1, mitochondrial (686 aa).

Polar residues predominate over residues 55–67; that stretch reads RMSSLCSDSSTPV. The tract at residues 55–79 is disordered; it reads RMSSLCSDSSTPVAPQEEEEEESFG. PPR repeat units follow at residues 124–160, 161–195, 196–234, 235–269, and 270–306; these read TPYWYFLQCKRLLKEGKLAEALDLFERQMLKEERLQP, LECNYTVLIGGCGRVGYLKKAFRLFNDMKKRDLEP, SDATYTALFNVCAESPWKDSALQSALKLRQQLQAQNFQL, NLKTYHALLKVAAKCADLRVCLEVFKEIIQKGHAV, and TEETFCFLLMGCIQDKKTGFRQAMQVWRQMLSLGIKP. The interval 383-407 is disordered; the sequence is KLEGPPAFPEARETSRTQPEVETKA. Basic and acidic residues predominate over residues 392–407; that stretch reads EARETSRTQPEVETKA. PPR repeat units follow at residues 508 to 542 and 575 to 609; these read DITFFNTLIRKKSKLGDLEGAKALLPILAKKGIVP and NTHIYSTLINAALKKLDYTYLISILKDMRRNSVPV.

The protein belongs to the PTCD1 family. As to quaternary structure, associates with mitochondrial leucine tRNAs. Interacts with ELAC2.

It is found in the mitochondrion matrix. Its function is as follows. Mitochondrial protein implicated in negative regulation of leucine tRNA levels, as well as negative regulation of mitochondria-encoded proteins and COX activity. Also affects the 3'-processing of mitochondrial tRNAs. This is Pentatricopeptide repeat-containing protein 1, mitochondrial (Ptcd1) from Rattus norvegicus (Rat).